Consider the following 80-residue polypeptide: UPF0346 protein LSEI_1394 (80 aa).

It belongs to the UPF0346 family.

This chain is UPF0346 protein LSEI_1394, found in Lacticaseibacillus paracasei (strain ATCC 334 / BCRC 17002 / CCUG 31169 / CIP 107868 / KCTC 3260 / NRRL B-441) (Lactobacillus paracasei).